A 330-amino-acid polypeptide reads, in one-letter code: Alpha/beta hydrolase domain-containing protein VTE7 (330 aa).

The region spanning 84-315 (VVLLHCFDSS…GHLPHVENPK (232 aa)) is the AB hydrolase-1 domain. Catalysis depends on serine 157, which acts as the Nucleophile. Catalysis depends on charge relay system residues aspartate 279 and histidine 307.

It belongs to the AB hydrolase superfamily.

It is found in the plastid. The protein localises to the chloroplast envelope. In terms of biological role, hydrolase involved in tocopherol (vitamin E) biosynthesis. Releases prenyl alcohols from chlorophyll biosynthetic intermediates, which are then converted to the corresponding diphosphates for tocopherol biosynthesis. Provides most of the phytol from chlorophyll for tocopherol biosynthesis in seeds. The chain is Alpha/beta hydrolase domain-containing protein VTE7 from Arabidopsis thaliana (Mouse-ear cress).